A 244-amino-acid chain; its full sequence is tRNA pseudouridine synthase A (244 aa).

Aspartate 52 acts as the Nucleophile in catalysis. Tyrosine 110 contacts substrate.

This sequence belongs to the tRNA pseudouridine synthase TruA family. Homodimer.

It catalyses the reaction uridine(38/39/40) in tRNA = pseudouridine(38/39/40) in tRNA. Its function is as follows. Formation of pseudouridine at positions 38, 39 and 40 in the anticodon stem and loop of transfer RNAs. This chain is tRNA pseudouridine synthase A, found in Geotalea uraniireducens (strain Rf4) (Geobacter uraniireducens).